An 89-amino-acid chain; its full sequence is MISLMEARNLRKERTGVVLSNKMEKTITVAAKFKEKHPIYGKFVSKTKKYHAHDEKNECNIGDTVRIMETRPLSKTKRWRLVEIIERAK.

The protein belongs to the universal ribosomal protein uS17 family. In terms of assembly, part of the 30S ribosomal subunit.

Functionally, one of the primary rRNA binding proteins, it binds specifically to the 5'-end of 16S ribosomal RNA. The chain is Small ribosomal subunit protein uS17A from Bacteroides thetaiotaomicron (strain ATCC 29148 / DSM 2079 / JCM 5827 / CCUG 10774 / NCTC 10582 / VPI-5482 / E50).